The chain runs to 596 residues: Actin-related protein 9 (596 aa).

The interval 148–178 is disordered; it reads LASPAETSPDKGDASASEAVPDVTDSKDTSE.

Belongs to the actin family. ARP8 subfamily.

This is Actin-related protein 9 (ARP9) from Arabidopsis thaliana (Mouse-ear cress).